The sequence spans 439 residues: Acyl-coenzyme A thioesterase 10, mitochondrial (439 aa).

The transit peptide at 1–21 (MKRAAMRLWTLNKGLLTHGRG) directs the protein to the mitochondrion. 2 HotDog ACOT-type domains span residues 85 to 209 (SYIE…QDSE) and 289 to 401 (EDTK…EKEV).

It belongs to the acyl coenzyme A hydrolase family.

The protein resides in the mitochondrion. Its function is as follows. Catalyzes the hydrolysis of acyl-CoAs into free fatty acids and coenzyme A (CoASH), regulating their respective intracellular levels. Active on long chain acyl-CoAs. In Mus musculus (Mouse), this protein is Acyl-coenzyme A thioesterase 10, mitochondrial.